Here is a 167-residue protein sequence, read N- to C-terminus: Epithelial membrane protein 2 (167 aa).

Residues 1–21 (MLVLLAFIIVFHITSAALLLV) traverse the membrane as a helical segment. N-linked (GlcNAc...) asparagine glycans are attached at residues Asn-44, Asn-47, and Asn-52. The next 3 membrane-spanning stretches (helical) occupy residues 67 to 87 (TMIL…LQLF), 95 to 115 (FVLT…AASI), and 143 to 163 (FILA…YLIL).

The protein belongs to the PMP-22/EMP/MP20 family. In terms of assembly, interacts with PTK2; regulates PTK2 activation and localization. Interacts with ITGB3; regulates the levels of the heterodimer ITGA5-ITGB3 integrin surface expression. Interacts with P2RX7 (via C-terminus). Interacts with ITGB1; the interaction may be direct or indirect and ITGB1 has a heterodimer form.

It localises to the golgi apparatus membrane. The protein resides in the cell membrane. It is found in the apical cell membrane. Its subcellular location is the membrane raft. The protein localises to the cytoplasm. It localises to the nucleus. The protein resides in the perinuclear region. Its function is as follows. Functions as a key regulator of cell membrane composition by regulating protein surface expression. Also, plays a role in regulation of processes including cell migration, cell proliferation, cell contraction and cell adhesion. Regulates transepithelial migration of neutrophils into the alveolar lumen, potentially via mediation of cell surface expression of adhesion markers and lipid raft formation. Negatively regulates caveolae formation by reducing CAV1 expression and CAV1 amount by increasing lysosomal degradation. Facilitates surface trafficking and the formation of lipid rafts bearing GPI-anchor proteins. Regulates surface expression of MHC1 and ICAM1 proteins increasing susceptibility to T-cell mediated cytotoxicity. Regulates the plasma membrane expression of the integrin heterodimers ITGA6-ITGB1, ITGA5-ITGB3 and ITGA5-ITGB1 resulting in modulation of cell-matrix adhesion. Also regulates many processes through PTK2. Regulates blood vessel endothelial cell migration and angiogenesis by regulating VEGF protein expression through PTK2 activation. Regulates cell migration and cell contraction through PTK2 and SRC activation. Regulates focal adhesion density, F-actin conformation and cell adhesion capacity through interaction with PTK2. Positively regulates cell proliferation. Plays a role during cell death and cell blebbing. Promotes angiogenesis and vasculogenesis through induction of VEGFA via a HIF1A-dependent pathway. Also plays a role in embryo implantation by regulating surface trafficking of integrin heterodimer ITGA5-ITGB3. Plays a role in placental angiogenesis and uterine natural killer cell regulation at the maternal-fetal placental interface, however not required in the maternal tissues for a viable pregnancy. Involved in the early stages of embryogenic development and cardiogenesis, potentially via regulation of epithelial-mesenchymal transition timing. May play a role in glomerular filtration. This chain is Epithelial membrane protein 2 (EMP2), found in Bos taurus (Bovine).